A 173-amino-acid polypeptide reads, in one-letter code: Crossover junction endodeoxyribonuclease RuvC (173 aa).

Catalysis depends on residues aspartate 8, glutamate 67, and aspartate 139. Residues aspartate 8, glutamate 67, and aspartate 139 each coordinate Mg(2+).

This sequence belongs to the RuvC family. As to quaternary structure, homodimer which binds Holliday junction (HJ) DNA. The HJ becomes 2-fold symmetrical on binding to RuvC with unstacked arms; it has a different conformation from HJ DNA in complex with RuvA. In the full resolvosome a probable DNA-RuvA(4)-RuvB(12)-RuvC(2) complex forms which resolves the HJ. The cofactor is Mg(2+).

It localises to the cytoplasm. The catalysed reaction is Endonucleolytic cleavage at a junction such as a reciprocal single-stranded crossover between two homologous DNA duplexes (Holliday junction).. In terms of biological role, the RuvA-RuvB-RuvC complex processes Holliday junction (HJ) DNA during genetic recombination and DNA repair. Endonuclease that resolves HJ intermediates. Cleaves cruciform DNA by making single-stranded nicks across the HJ at symmetrical positions within the homologous arms, yielding a 5'-phosphate and a 3'-hydroxyl group; requires a central core of homology in the junction. The consensus cleavage sequence is 5'-(A/T)TT(C/G)-3'. Cleavage occurs on the 3'-side of the TT dinucleotide at the point of strand exchange. HJ branch migration catalyzed by RuvA-RuvB allows RuvC to scan DNA until it finds its consensus sequence, where it cleaves and resolves the cruciform DNA. The chain is Crossover junction endodeoxyribonuclease RuvC from Salmonella dublin (strain CT_02021853).